The sequence spans 328 residues: Acetaldehyde dehydrogenase 3 (328 aa).

Residue 17–20 (SGNI) participates in NAD(+) binding. The active-site Acyl-thioester intermediate is C135. NAD(+) is bound by residues 166–174 (SAGPGTRAN) and N298.

The protein belongs to the acetaldehyde dehydrogenase family.

It catalyses the reaction acetaldehyde + NAD(+) + CoA = acetyl-CoA + NADH + H(+). The sequence is that of Acetaldehyde dehydrogenase 3 from Nocardia farcinica (strain IFM 10152).